The following is a 205-amino-acid chain: UPF0111 protein YkaA (205 aa).

This sequence belongs to the UPF0111 family.

The chain is UPF0111 protein YkaA (ykaA) from Bacillus subtilis (strain 168).